Here is a 183-residue protein sequence, read N- to C-terminus: Translation initiation factor IF-3 (183 aa).

Belongs to the IF-3 family. Monomer.

The protein resides in the cytoplasm. Its function is as follows. IF-3 binds to the 30S ribosomal subunit and shifts the equilibrium between 70S ribosomes and their 50S and 30S subunits in favor of the free subunits, thus enhancing the availability of 30S subunits on which protein synthesis initiation begins. The chain is Translation initiation factor IF-3 from Pseudomonas aeruginosa (strain ATCC 15692 / DSM 22644 / CIP 104116 / JCM 14847 / LMG 12228 / 1C / PRS 101 / PAO1).